The chain runs to 188 residues: Ribosome-recycling factor (188 aa).

This sequence belongs to the RRF family.

The protein localises to the cytoplasm. Responsible for the release of ribosomes from messenger RNA at the termination of protein biosynthesis. May increase the efficiency of translation by recycling ribosomes from one round of translation to another. The sequence is that of Ribosome-recycling factor from Gluconobacter oxydans (strain 621H) (Gluconobacter suboxydans).